The chain runs to 405 residues: S-adenosylmethionine synthase (405 aa).

141–146 (GQGSVD) contributes to the ATP binding site.

It belongs to the AdoMet synthase 2 family. The cofactor is Mg(2+).

It catalyses the reaction L-methionine + ATP + H2O = S-adenosyl-L-methionine + phosphate + diphosphate. The protein operates within amino-acid biosynthesis; S-adenosyl-L-methionine biosynthesis; S-adenosyl-L-methionine from L-methionine: step 1/1. In terms of biological role, catalyzes the formation of S-adenosylmethionine from methionine and ATP. In Methanococcus maripaludis (strain C7 / ATCC BAA-1331), this protein is S-adenosylmethionine synthase.